Here is a 216-residue protein sequence, read N- to C-terminus: uncharacterized protein (216 aa).

Residues 125–176 enclose the Cupin type-2 domain; sequence YPKSTNFDSHYHDCDEYWVIIEGAGTVVVGSRSFEVEVGDCVAIGMGHHHDL.

This is an uncharacterized protein from Sinorhizobium fredii (strain NBRC 101917 / NGR234).